Here is a 283-residue protein sequence, read N- to C-terminus: Non-selective voltage-gated ion channel VDAC3 (283 aa).

The residue at position 2 (Cys-2) is an N-acetylcysteine. Thr-4 carries the post-translational modification Phosphothreonine. N6-acetyllysine is present on residues Lys-12, Lys-15, and Lys-20. 2 beta stranded membrane-spanning segments follow: residues 26–35 (MVKIDLKTKS) and 39–47 (VEFSTSGHA). Glycyl lysine isopeptide (Lys-Gly) (interchain with G-Cter in ubiquitin) cross-links involve residues Lys-53 and Lys-61. The next 3 beta stranded transmembrane spans lie at 54–64 (ASGNLETKYKV), 69–76 (LTFTQKWN), and 80–89 (TLGTEISWEN). An N6-acetyllysine modification is found at Lys-90. The chain crosses the membrane as a beta stranded span at residues 95–104 (LKLTLDTIFV). Residues Lys-109 and Lys-110 each participate in a glycyl lysine isopeptide (Lys-Gly) (interchain with G-Cter in ubiquitin) cross-link. The next 10 beta stranded transmembrane spans lie at 111-120 (SGKLKASYKR), 123-130 (FSVGSNVD), 137-145 (TIYGWAVLA), 150-158 (LAGYQMSFD), 163-175 (KLSQNNFALGYKA), 178-185 (FQLHTHVN), 189-198 (EFGGSIYQKV), 202-211 (IETSINLAWT), 218-227 (RFGIAAKYML), and 231-238 (TSLSAKVN). Lys-163 participates in a covalent cross-link: Glycyl lysine isopeptide (Lys-Gly) (interchain with G-Cter in ubiquitin). Residue Ser-241 is modified to Phosphoserine. NAD(+)-binding positions include 242-244 (LIG) and 260-264 (SALID). 2 beta stranded membrane passes run 242 to 251 (LIGLGYTQTL) and 254 to 263 (GVKLTLSALI). Lys-266 is subject to N6-acetyllysine; alternate. Lys-266 participates in a covalent cross-link: Glycyl lysine isopeptide (Lys-Gly) (interchain with G-Cter in ubiquitin); alternate. Residues 273–282 (HKVGLGFELE) traverse the membrane as a beta stranded segment. A Glycyl lysine isopeptide (Lys-Gly) (interchain with G-Cter in ubiquitin) cross-link involves residue Lys-274.

The protein belongs to the eukaryotic mitochondrial porin family. Interacts with ARMC12 in a TBC1D21-dependent manner. Interacts with MISFA. Ubiquitinated by PRKN during mitophagy, leading to its degradation and enhancement of mitophagy. Deubiquitinated by USP30. In terms of tissue distribution, expressed in erythrocytes (at protein level). Widely expressed. Highest in testis.

The protein localises to the mitochondrion outer membrane. It localises to the membrane. It carries out the reaction chloride(in) = chloride(out). It catalyses the reaction K(+)(in) = K(+)(out). Its function is as follows. Non-selective voltage-gated ion channel that mediates the transport of anions and cations through the mitochondrion outer membrane and plasma membrane. Forms a high-conducting channel with a stable open state and a voltage-induced closure with a mild preference for anions over cations. Involved in male fertility and sperm mitochondrial sheath formation. This is Non-selective voltage-gated ion channel VDAC3 from Homo sapiens (Human).